The primary structure comprises 701 residues: Polyribonucleotide nucleotidyltransferase (701 aa).

2 residues coordinate Mg(2+): D487 and D493. One can recognise a KH domain in the interval 554–613; the sequence is PTMLQMKIDSDKIRDVIGKGGATIRGICEETKASIDIEDDGSVKIYGETKEAAEAAKLRV. Residues 623-691 form the S1 motif domain; sequence GKIYVGKVER…NRGRIKLSIK (69 aa).

It belongs to the polyribonucleotide nucleotidyltransferase family. As to quaternary structure, component of the RNA degradosome, which is a multiprotein complex involved in RNA processing and mRNA degradation. Mg(2+) serves as cofactor.

It is found in the cytoplasm. The enzyme catalyses RNA(n+1) + phosphate = RNA(n) + a ribonucleoside 5'-diphosphate. Involved in mRNA degradation. Catalyzes the phosphorolysis of single-stranded polyribonucleotides processively in the 3'- to 5'-direction. In Pseudomonas aeruginosa (strain LESB58), this protein is Polyribonucleotide nucleotidyltransferase.